Here is a 365-residue protein sequence, read N- to C-terminus: Pyruvate dehydrogenase E1 component subunit beta, mitochondrial (365 aa).

The N-terminal 24 residues, 1–24 (MLRTRLIQAASSAQRAFSTSQKAL), are a transit peptide targeting the mitochondrion. Glu85 provides a ligand contact to thiamine diphosphate. Residues Ile138, Ala186, Ile187, and Asp189 each contribute to the K(+) site.

Thiamine diphosphate serves as cofactor. In terms of tissue distribution, expressed in salivary glands (at protein level).

The protein resides in the mitochondrion matrix. It carries out the reaction N(6)-[(R)-lipoyl]-L-lysyl-[protein] + pyruvate + H(+) = N(6)-[(R)-S(8)-acetyldihydrolipoyl]-L-lysyl-[protein] + CO2. Its function is as follows. The pyruvate dehydrogenase complex catalyzes the overall conversion of pyruvate to acetyl-CoA and CO(2). Might play a role in regulating synapse structure formation at neuromuscular junctions. Might play a role in maintenance of mitochondrial morphology. The chain is Pyruvate dehydrogenase E1 component subunit beta, mitochondrial from Drosophila melanogaster (Fruit fly).